We begin with the raw amino-acid sequence, 863 residues long: MQEQYLPSEIEAKVQQHWQDTKTFEVTEDESKEKFYCLSMFPYPSGRLHMGHVRNYTIGDVVARYQRLQGKNVLQPIGWDSFGLPAENAAINNKTAPAPWTYENIDYMKNQLKMLGFGYDWSREIATCTPEYYRWEQWFFTKLYEKGLVYKKTASVNWCPNDETVLANEQVQDGCCWRCDTQVVQKEIPQWFIKITDYAEELLNDIDQLDEWPEQVKTMQRNWIGRSEGIEMTFQVEGSDQSFDIYTTRPDTVMGVTYVAIAAGHPLAQQAAENNPVLAEFIEECKNADTTEAAMAAMEKKGVDTGLKAIHPLTGKLVPIWAANFVLMNYGTGAVMSVPGHDQRDYEFATKYGLPIVGVIKPADGELDISEEAYTEKGILFNSGDSFPELDGLDFQAAFDAIDAKLSSEGKGKRQVNYRLRDWGVSRQRYWGAPIPMVTLADGTVMPTPEDQLPVILPEDVVMDGIQSPIKADKEWAKTQVNGQEAFRETDTFDTFMESSWYYARYCSPKADQMLDPAKANYWLPVDQYIGGIEHACMHLLYFRFFHKLLRDIGLVNSDEPAKRLLTQGMVLADAFYYTDDKGARVWVSPNDAKVTETDDKGRIVKAVDSQGHELVYTGMSKMSKSKNNGIDPQEMVDKYGADTVRLFMMFASPPELTLEWQESSVEGAHRFIKRLWKLAHDHVSQGPTVALNVASLDSAQKELRRELHKTIAKVGDDIERRQMFNTAIASVMELMNRLQKAPMESEQDRALMQEALCAVVRLLYPIIPHTSFELWQALGHEETIENVLWPVVDESALVEDSKLIIVQVNGKLRAKVTVAADADKDTVEAAGMAEEGVIKHTEGKTVRKVIYVPGKLLNIVAN.

The 'HIGH' region signature appears at 42-52 (PYPSGRLHMGH). The 'KMSKS' region motif lies at 622–626 (KMSKS). K625 is a binding site for ATP.

The protein belongs to the class-I aminoacyl-tRNA synthetase family.

It is found in the cytoplasm. The catalysed reaction is tRNA(Leu) + L-leucine + ATP = L-leucyl-tRNA(Leu) + AMP + diphosphate. This Shewanella loihica (strain ATCC BAA-1088 / PV-4) protein is Leucine--tRNA ligase.